The chain runs to 52 residues: Lysis protein for colicin N (52 aa).

Positions 1–17 (MCGKILLILFFIMTLSA) are cleaved as a signal peptide. A lipid anchor (N-palmitoyl cysteine) is attached at Cys18. The S-diacylglycerol cysteine moiety is linked to residue Cys18.

It localises to the cell outer membrane. Lysis proteins are required for both colicin release and partial cell lysis. This is Lysis protein for colicin N (cnl) from Escherichia coli.